Here is a 230-residue protein sequence, read N- to C-terminus: Heptaprenylglyceryl phosphate synthase (230 aa).

Lys12 serves as a coordination point for sn-glycerol 1-phosphate. Residues Asp14 and Thr40 each coordinate Mg(2+). Sn-glycerol 1-phosphate is bound by residues Tyr159–Gly164, Gly189, and Gly209–Asp210.

Belongs to the GGGP/HepGP synthase family. Group I subfamily. Homodimer. It depends on Mg(2+) as a cofactor.

It carries out the reaction sn-glycerol 1-phosphate + all-trans-heptaprenyl diphosphate = 3-heptaprenyl-sn-glycero-1-phosphate + diphosphate. Its pathway is membrane lipid metabolism; glycerophospholipid metabolism. Prenyltransferase that catalyzes in vivo the transfer of the heptaprenyl moiety of heptaprenyl pyrophosphate (HepPP; 35 carbon atoms) to the C3 hydroxyl of sn-glycerol-1-phosphate (G1P), producing heptaprenylglyceryl phosphate (HepGP). This reaction is an ether-bond-formation step in the biosynthesis of archaea-type G1P-based membrane lipids found in Bacillales. The sequence is that of Heptaprenylglyceryl phosphate synthase from Staphylococcus aureus (strain MRSA252).